A 543-amino-acid polypeptide reads, in one-letter code: Protein MGF 505-10R (543 aa).

The protein belongs to the asfivirus MGF 505 family.

Its function is as follows. Plays a role in virus cell tropism, and may be required for efficient virus replication in macrophages. In African swine fever virus (isolate Tick/South Africa/Pretoriuskop Pr4/1996) (ASFV), this protein is Protein MGF 505-10R.